A 306-amino-acid polypeptide reads, in one-letter code: MSNEFINFEKISRESWKTLHQKAKALLTQEELKSITSLNDNISINDVIDIYLPLINLIQVYKIAQENLSFSKSLFLKKDIQLRPFIIGISGSVAVGKSTTSRLLQLLLSRTHPNSQVELVTTDGFLYPNQFLIEQGLLNRKGFPESYNMELLLDFLDSIKNGQTAFAPVYSHDIYDIIPNQKQSFNNPDFLIVEGINVFQNQQNNRLYMSDYFDFSIYIDADSSHIETWYIERFLSILKLAKRDPHNYYAQYAQLPRSEAIAFARNVWKTVNLENLEKFIEPTRNRAELILHKSADHKIDEIYLKK.

91–98 is a binding site for ATP; it reads GSVAVGKS.

This sequence belongs to the prokaryotic pantothenate kinase family.

It is found in the cytoplasm. It catalyses the reaction (R)-pantothenate + ATP = (R)-4'-phosphopantothenate + ADP + H(+). It participates in cofactor biosynthesis; coenzyme A biosynthesis; CoA from (R)-pantothenate: step 1/5. In Streptococcus pyogenes serotype M1, this protein is Pantothenate kinase (coaA).